The primary structure comprises 56 residues: Small ribosomal subunit protein uS14 (56 aa).

Residues cysteine 21, cysteine 24, cysteine 39, and cysteine 42 each contribute to the Zn(2+) site.

The protein belongs to the universal ribosomal protein uS14 family. In terms of assembly, component of the 40S small ribosomal subunit. It depends on Zn(2+) as a cofactor.

Its subcellular location is the cytoplasm. It is found in the cytosol. It localises to the rough endoplasmic reticulum. In Scarabaeus laticollis (Scarab dung beetle), this protein is Small ribosomal subunit protein uS14 (RpS29).